The primary structure comprises 332 residues: L-lactate dehydrogenase A chain (332 aa).

NAD(+)-binding positions include 29–57 and Arg-99; that span reads GMVG…MEDK. Arg-106, Asn-138, and Arg-169 together coordinate substrate. Position 138 (Asn-138) interacts with NAD(+). The active-site Proton acceptor is the His-193. Residue Thr-248 coordinates substrate.

The protein belongs to the LDH/MDH superfamily. LDH family. Homotetramer.

It localises to the cytoplasm. The catalysed reaction is (S)-lactate + NAD(+) = pyruvate + NADH + H(+). It functions in the pathway fermentation; pyruvate fermentation to lactate; (S)-lactate from pyruvate: step 1/1. In terms of biological role, interconverts simultaneously and stereospecifically pyruvate and lactate with concomitant interconversion of NADH and NAD(+). This Rhinogobiops nicholsii (Blackeye goby) protein is L-lactate dehydrogenase A chain (ldha).